A 543-amino-acid chain; its full sequence is Vibriobactin-specific 2,3-dihydroxybenzoate-AMP ligase (543 aa).

Residues 240 to 259 (FPLSSPGALGVFWAGGCVVL) form a helical membrane-spanning segment.

This sequence belongs to the ATP-dependent AMP-binding enzyme family.

It localises to the cell inner membrane. It catalyses the reaction 2,3-dihydroxybenzoate + holo-[ACP] + ATP = 2,3-dihydroxybenzoyl-[ACP] + AMP + diphosphate. The protein operates within siderophore biosynthesis; vibriobactin biosynthesis. Activation of the carboxylate group of 2,3-dihydroxy-benzoate (DHB), via ATP-dependent PPi exchange reactions, to the acyladenylate, preparing that molecule for the final stages of vibriobactin synthesis. This Vibrio cholerae serotype O1 (strain ATCC 39315 / El Tor Inaba N16961) protein is Vibriobactin-specific 2,3-dihydroxybenzoate-AMP ligase (vibE).